A 1312-amino-acid chain; its full sequence is Tetratricopeptide repeat protein 21B (1312 aa).

TPR repeat units follow at residues 4-38 (TDHY…YSND), 110-143 (PKAL…SNRS), 147-180 (LVLR…NKDI), 182-213 (ALIG…YPPF), 214-247 (LPAL…DGAN), and 325-358 (AEVA…DGNH). A coiled-coil region spans residues 365–392 (VIQCQILQGQLEEAEQQLDFLHEIQESI). TPR repeat units follow at residues 493-526 (TEPL…DTAC), 528-560 (DFHL…NFKV), 564-597 (PLYH…QEMK), 615-648 (VSIY…FGGT), 720-753 (PHTS…NPQD), 755-787 (SLAN…SGQD), 789-820 (LCCD…EPVS), 829-861 (AKCL…QQRI), 881-914 (SEIC…SQDS), 916-947 (VKLQ…HSFK), 948-981 (EEAA…NPDN), 983-1015 (AVLS…SSRT), 1019-1052 (PGYN…SEWG), 1193-1226 (EKSW…NKSC), 1228-1260 (KAYE…SNQS), and 1262-1295 (PAVG…HPTY).

Belongs to the TTC21 family. As to quaternary structure, component of the IFT complex A (IFT-A).

Functionally, component of the IFT complex A (IFT-A), a complex required for retrograde ciliary transport and entry into cilia of G protein-coupled receptors (GPCRs). Negatively modulates the SHH signal transduction. The protein is Tetratricopeptide repeat protein 21B (ttc21b) of Xenopus laevis (African clawed frog).